The chain runs to 350 residues: Inactive ADP-ribosyltransferase arh2 (350 aa).

It belongs to the ADP-ribosylglycohydrolase family.

Its subcellular location is the cytoplasm. It is found in the myofibril. It localises to the sarcomere. Required for myofibril assembly and outgrowth of the cardiac chambers in the developing heart. Appears to be catalytically inactive, showing no activity against O-acetyl-ADP-ribose. This Danio rerio (Zebrafish) protein is Inactive ADP-ribosyltransferase arh2 (adprhl1).